The chain runs to 184 residues: Small ribosomal subunit protein eS8 (184 aa).

Residues 1 to 23 (MGISRDSRHKRRLTGGRYPVHKK) are disordered. The segment covering 7–23 (SRHKRRLTGGRYPVHKK) has biased composition (basic residues).

This sequence belongs to the eukaryotic ribosomal protein eS8 family.

The protein is Small ribosomal subunit protein eS8 (RPS8) of Theileria annulata.